The primary structure comprises 360 residues: Peptide chain release factor 1 (360 aa).

Gln235 is subject to N5-methylglutamine.

The protein belongs to the prokaryotic/mitochondrial release factor family. In terms of processing, methylated by PrmC. Methylation increases the termination efficiency of RF1.

The protein resides in the cytoplasm. In terms of biological role, peptide chain release factor 1 directs the termination of translation in response to the peptide chain termination codons UAG and UAA. This Janthinobacterium sp. (strain Marseille) (Minibacterium massiliensis) protein is Peptide chain release factor 1.